The chain runs to 287 residues: Lycopene elongase/hydratase (287 aa).

Helical transmembrane passes span isoleucine 15 to isoleucine 35, tryptophan 37 to isoleucine 57, threonine 87 to glycine 107, phenylalanine 137 to isoleucine 157, methionine 166 to valine 186, leucine 218 to isoleucine 238, and valine 265 to histidine 285.

The protein belongs to the UbiA prenyltransferase family.

Its subcellular location is the cell membrane. It catalyses the reaction all-trans-lycopene + dimethylallyl diphosphate + A + H2O = nonaflavuxanthin + AH2 + diphosphate. The enzyme catalyses nonaflavuxanthin + dimethylallyl diphosphate + A + H2O = flavuxanthin + AH2 + diphosphate. Its pathway is carotenoid biosynthesis. Functionally, catalyzes the elongation of the C(40) carotenoid all-trans-lycopene to the acyclic C(50) carotenoid flavuxanthin during decaprenoxanthin biosynthesis. Acts as a bifunctional enzyme that catalyzes the elongation of lycopene by attaching a C(5) isoprene unit at C-2, as well as the hydroxylation of the new isoprene unit. The enzyme acts at both ends of the substrate, forming the C(50) carotenoid flavuxanthin via the C(45) intermediate nonaflavuxanthin. The chain is Lycopene elongase/hydratase from Corynebacterium glutamicum (strain ATCC 13032 / DSM 20300 / JCM 1318 / BCRC 11384 / CCUG 27702 / LMG 3730 / NBRC 12168 / NCIMB 10025 / NRRL B-2784 / 534).